A 312-amino-acid chain; its full sequence is Non-structural protein 12A (312 aa).

Low complexity predominate over residues 1-23; sequence MFKSGSGSLKRSGSISSVKSFSG. Disordered stretches follow at residues 1-37, 62-99, and 111-161; these read MFKS…RGSV, FVPE…QNAD, and ESSK…GTGD. The span at 63–77 shows a compositional bias: basic and acidic residues; the sequence is VPEKTKSEGNLKDKS. Residues 78-98 show a composition bias toward polar residues; it reads SVITGNFGSSGPINAHTNQNA. A compositionally biased stretch (basic and acidic residues) spans 122–134; sequence DARHTATDSRLSQ.

Belongs to the phytoreovirus non-structural protein Pns12A family.

The protein resides in the host cytoplasm. Its function is as follows. Constituent of viral factories. Binds to ssRNA and dsRNA. The protein is Non-structural protein 12A of Alopecurus aequalis (Barnyard grass).